Here is a 1193-residue protein sequence, read N- to C-terminus: Pyruvate carboxylase (1193 aa).

The 453-residue stretch at 41–493 (QFQKILVANR…WTTFIDDTPE (453 aa)) folds into the Biotin carboxylation domain. Lys159, Glu243, and His278 together coordinate ATP. The ATP-grasp domain occupies 163-360 (RQLAIRCNVP…IVAAQIQIAA (198 aa)). Arg335 is a catalytic residue. The region spanning 579-847 (CLIMDTTWRD…DPGLNSAHVR (269 aa)) is the Pyruvate carboxyltransferase domain. Substrate contacts are provided by residues 587–591 (RDAHQ) and Arg660. Asp588 is an a divalent metal cation binding site. 3 residues coordinate a divalent metal cation: Lys756, His786, and His788. N6-carboxylysine is present on Lys756. Thr921 provides a ligand contact to substrate. The Biotinyl-binding domain occupies 1116 to 1191 (KADVGDSSQV…DGQDLVCKIT (76 aa)). An N6-biotinyllysine modification is found at Lys1157.

It depends on biotin as a cofactor. Zn(2+) is required as a cofactor.

The protein localises to the cytoplasm. It carries out the reaction hydrogencarbonate + pyruvate + ATP = oxaloacetate + ADP + phosphate + H(+). It participates in carbohydrate biosynthesis; gluconeogenesis. In terms of biological role, pyruvate carboxylase catalyzes a 2-step reaction, involving the ATP-dependent carboxylation of the covalently attached biotin in the first step and the transfer of the carboxyl group to pyruvate in the second. The chain is Pyruvate carboxylase (pyc) from Aspergillus terreus.